The chain runs to 172 residues: MVDKRESYTKEDLLASGRGELFGANGPQLPAPNMLMMDRVVKMTETGGNFDKGYVEAELDINPDMWFFGCHFIGDPVMPGCLGLDAMWQLVGFYLGWLGGEGKGRALGVGEVKFTGQVLPSAKKVTYRIHFKRVVNRRLVMGIADGEVLVDGKQIYTATDLKVGLFQDTSAF.

Residue H71 is part of the active site.

The protein belongs to the thioester dehydratase family. FabA subfamily. Homodimer.

It localises to the cytoplasm. It carries out the reaction a (3R)-hydroxyacyl-[ACP] = a (2E)-enoyl-[ACP] + H2O. The catalysed reaction is (3R)-hydroxydecanoyl-[ACP] = (2E)-decenoyl-[ACP] + H2O. It catalyses the reaction (2E)-decenoyl-[ACP] = (3Z)-decenoyl-[ACP]. It participates in lipid metabolism; fatty acid biosynthesis. Functionally, necessary for the introduction of cis unsaturation into fatty acids. Catalyzes the dehydration of (3R)-3-hydroxydecanoyl-ACP to E-(2)-decenoyl-ACP and then its isomerization to Z-(3)-decenoyl-ACP. Can catalyze the dehydratase reaction for beta-hydroxyacyl-ACPs with saturated chain lengths up to 16:0, being most active on intermediate chain length. This Cronobacter sakazakii (strain ATCC BAA-894) (Enterobacter sakazakii) protein is 3-hydroxydecanoyl-[acyl-carrier-protein] dehydratase.